The chain runs to 187 residues: Elongation factor P (187 aa).

The protein belongs to the elongation factor P family.

Its subcellular location is the cytoplasm. The protein operates within protein biosynthesis; polypeptide chain elongation. Its function is as follows. Involved in peptide bond synthesis. Stimulates efficient translation and peptide-bond synthesis on native or reconstituted 70S ribosomes in vitro. Probably functions indirectly by altering the affinity of the ribosome for aminoacyl-tRNA, thus increasing their reactivity as acceptors for peptidyl transferase. This Corynebacterium kroppenstedtii (strain DSM 44385 / JCM 11950 / CIP 105744 / CCUG 35717) protein is Elongation factor P.